A 159-amino-acid polypeptide reads, in one-letter code: Secreted RxLR effector protein 50 (159 aa).

Positions 1–19 are cleaved as a signal peptide; it reads MRSSTVLYVLGAAILAVNG. The RxLR-dEER motif lies at 38 to 54; it reads RWLRSNAMEHETDDEER.

It belongs to the RxLR effector family.

It is found in the secreted. The protein resides in the host nucleus. The protein localises to the host cytoplasm. Functionally, secreted effector that completely suppresses the host cell death induced by cell death-inducing proteins. This Plasmopara viticola (Downy mildew of grapevine) protein is Secreted RxLR effector protein 50.